The sequence spans 44 residues: Photosystem I reaction center subunit IX (44 aa).

Residues 7–27 traverse the membrane as a helical segment; it reads YLSTAPVLTTLWFGSLAGLLI.

This sequence belongs to the PsaJ family.

It is found in the plastid. The protein resides in the chloroplast thylakoid membrane. Its function is as follows. May help in the organization of the PsaE and PsaF subunits. This is Photosystem I reaction center subunit IX from Phalaenopsis aphrodite subsp. formosana (Moth orchid).